Reading from the N-terminus, the 607-residue chain is T-box transcription factor TBX18 (607 aa).

Residues 18 to 28 carry the Engrailed homology 1 repressor motif; it reads HAFSVEALIGA. The segment at 30 to 141 is disordered; it reads KQQQLQKKRR…PLPSPQAPRV (112 aa). The Nuclear localization signal signature appears at 36 to 40; it reads KKRRK. A compositionally biased stretch (low complexity) spans 44–53; that stretch reads EEAAGAVDDG. The T-box DNA-binding region spans 143 to 330; it reads LQGAELWKRF…RNPFAKGFRD (188 aa).

In terms of assembly, homodimer. Can form a heterodimer with TBX15. Interacts with GATA4 and NKX2-5. Interacts with PAX3. Interacts (via engrailed homology 1 repressor motif) with TLE3; this interaction represses TBX18 transcriptional activity. Interacts with SIX1.

It localises to the nucleus. Functionally, acts as a transcriptional repressor involved in developmental processes of a variety of tissues and organs, including the heart and coronary vessels, the ureter and the vertebral column. Required for embryonic development of the sino atrial node (SAN) head area. In Homo sapiens (Human), this protein is T-box transcription factor TBX18 (TBX18).